We begin with the raw amino-acid sequence, 373 residues long: Chorismate synthase (373 aa).

Arg-46 provides a ligand contact to NADP(+). FMN contacts are provided by residues Arg-123–Ser-125, Asn-251–Ala-252, Gly-295, Lys-310–Ser-314, and Arg-337.

This sequence belongs to the chorismate synthase family. Requires FMNH2 as cofactor.

It carries out the reaction 5-O-(1-carboxyvinyl)-3-phosphoshikimate = chorismate + phosphate. Its pathway is metabolic intermediate biosynthesis; chorismate biosynthesis; chorismate from D-erythrose 4-phosphate and phosphoenolpyruvate: step 7/7. Functionally, catalyzes the anti-1,4-elimination of the C-3 phosphate and the C-6 proR hydrogen from 5-enolpyruvylshikimate-3-phosphate (EPSP) to yield chorismate, which is the branch point compound that serves as the starting substrate for the three terminal pathways of aromatic amino acid biosynthesis. This reaction introduces a second double bond into the aromatic ring system. The polypeptide is Chorismate synthase (Methanococcus maripaludis (strain C7 / ATCC BAA-1331)).